We begin with the raw amino-acid sequence, 486 residues long: Surface lipoprotein assembly modifier (486 aa).

The N-terminal stretch at 1-29 is a signal peptide; the sequence is MKNGVKQISFLSLIGLSLIGLSLTNIAWA. Positions 30-197 are N-terminal domain; that stretch reads KVARPKNDTL…QYLLTLNQRN (168 aa). The tract at residues 198 to 486 is C-terminal probable beta barrel; it reads QWIWQVGLNF…RIYLEIGKIF (289 aa). A run of 14 beta stranded transmembrane segments spans residues 199–209, 237–248, 253–262, 276–286, 290–300, 320–330, 334–344, 358–367, 373–382, 395–404, 409–419, 437–446, 453–463, and 476–486; these read WIWQVGLNFLN, GRVFFISRKKWP, FFSKTMFNGN, TLRIGGGLGYQ, VEVSLFPFQEK, LGIRLENVDWL, WQISTALEYGE, YFISSTLFYL, FWFVGMDFHR, KTLRLGWGQD, ISSRLTFSYAN, YATTITLWHR, LTPKLSWDYQK, and NRIYLEIGKIF.

The protein belongs to the Slam family.

Its subcellular location is the cell outer membrane. Its function is as follows. Required for correct export to the cell surface of some cell outer membrane lipoproteins (tested with TpbP) upon heterologous expression in E.coli and probably also in Haemophilus. The protein is Surface lipoprotein assembly modifier of Haemophilus influenzae (strain 86-028NP).